The following is a 525-amino-acid chain: Chromosomal replication initiator protein DnaA (525 aa).

Residues 1–71 (MNDFWQHCSA…ADLAREFWNT (71 aa)) form a domain I, interacts with DnaA modulators region. A domain II region spans residues 71 to 188 (TPIEVQFVLD…AEADSMYERS (118 aa)). Positions 160-181 (AAAGRRTWRPGPGAAPANGAEA) are disordered. Over residues 169–181 (PGPGAAPANGAEA) the composition is skewed to low complexity. Residues 189 to 405 (KLNPVLTFDN…GALRKILAYS (217 aa)) are domain III, AAA+ region. Residues G233, G235, K236, and T237 each coordinate ATP. The interval 406–525 (KFHGREISIE…LHVLEQTLKG (120 aa)) is domain IV, binds dsDNA.

This sequence belongs to the DnaA family. In terms of assembly, oligomerizes as a right-handed, spiral filament on DNA at oriC.

It is found in the cytoplasm. Its function is as follows. Plays an essential role in the initiation and regulation of chromosomal replication. ATP-DnaA binds to the origin of replication (oriC) to initiate formation of the DNA replication initiation complex once per cell cycle. Binds the DnaA box (a 9 base pair repeat at the origin) and separates the double-stranded (ds)DNA. Forms a right-handed helical filament on oriC DNA; dsDNA binds to the exterior of the filament while single-stranded (ss)DNA is stabiized in the filament's interior. The ATP-DnaA-oriC complex binds and stabilizes one strand of the AT-rich DNA unwinding element (DUE), permitting loading of DNA polymerase. After initiation quickly degrades to an ADP-DnaA complex that is not apt for DNA replication. Binds acidic phospholipids. The polypeptide is Chromosomal replication initiator protein DnaA (Burkholderia vietnamiensis (strain G4 / LMG 22486) (Burkholderia cepacia (strain R1808))).